The chain runs to 264 residues: MDNRPIGFLDSGVGGLTVVRELMRQLPHEEVIYIGDSARAPYGPRPAKQIKTYTWELVNFLLTKKVKMIVFACNTATAVVWEEVKEKLDIPVLGVILPGSSAAIKSTISGQIGIIGTPMTIKSNIYEQKIRDLSPQMKVRSLACPKFVPIVESNKMNSSVAKKIVYESLSPLVGKIDTLVLGCTHYPLLRPIIQNVMGPDVELIDSGAECVRDISVLLNYFDLNRSRTSKVLHHRFYTTASVASFKEIASDWLPLAIEVEHVTL.

Substrate is bound by residues 10-11 and 42-43; these read DS and YG. Catalysis depends on C73, which acts as the Proton donor/acceptor. Substrate is bound at residue 74–75; sequence NT. Residue C183 is the Proton donor/acceptor of the active site. Residue 184-185 participates in substrate binding; it reads TH.

The protein belongs to the aspartate/glutamate racemases family.

The enzyme catalyses L-glutamate = D-glutamate. It functions in the pathway cell wall biogenesis; peptidoglycan biosynthesis. In terms of biological role, provides the (R)-glutamate required for cell wall biosynthesis. This chain is Glutamate racemase, found in Streptococcus mutans serotype c (strain ATCC 700610 / UA159).